We begin with the raw amino-acid sequence, 144 residues long: Large ribosomal subunit protein uL15 (144 aa).

The tract at residues 1 to 53 (MRLNTLSPAEGAKHAPKRLGRGIGSGLGKTGGRGHKGQNSRSGGGVRRGFEGG) is disordered. The segment covering 21–31 (RGIGSGLGKTG) has biased composition (gly residues).

The protein belongs to the universal ribosomal protein uL15 family. Part of the 50S ribosomal subunit.

In terms of biological role, binds to the 23S rRNA. The chain is Large ribosomal subunit protein uL15 from Pectobacterium atrosepticum (strain SCRI 1043 / ATCC BAA-672) (Erwinia carotovora subsp. atroseptica).